We begin with the raw amino-acid sequence, 317 residues long: COP9 signalosome complex subunit 6b (317 aa).

The 154-residue stretch at 11–164 folds into the MPN domain; that stretch reads FKLHPLVMLN…VTIYESEFHV (154 aa).

It belongs to the peptidase M67A family. CSN6 subfamily. As to quaternary structure, component of the CSN complex, probably composed of CSN1, CSN2, CSN3, CSN4, CSN5 (CSN5A or CSN5B), CSN6 (CSN6A or CSN6B), CSN7 and CSN8. Interacts with itself. In the complex, it probably interacts directly with CSN4, CSN5A or CSN5B, and CSN7. Binds to the translation initiation factors TIF3E1.

It localises to the cytoplasm. Its subcellular location is the nucleus. Component of the COP9 signalosome complex (CSN), a complex involved in various cellular and developmental processes such as photomorphogenesis and auxin and jasmonate responses. The CSN complex is an essential regulator of the ubiquitin (Ubl) conjugation pathway by mediating the deneddylation of the cullin subunits of SCF-type E3 ligase complexes, leading to decrease the Ubl ligase activity of SCF. It is involved in repression of photomorphogenesis in darkness by regulating the activity of COP1-containing Ubl ligase complexes. The complex is also required for degradation of PSIAA6 by regulating the activity of the Ubl ligase SCF-TIR complex. Essential for the structural integrity of the CSN holocomplex. The protein is COP9 signalosome complex subunit 6b of Arabidopsis thaliana (Mouse-ear cress).